The sequence spans 311 residues: Delta(1)-pyrroline-2-carboxylate/Delta(1)-piperideine-2-carboxylate reductase (311 aa).

Belongs to the ornithine cyclodeaminase/mu-crystallin family. Homodimer.

It catalyses the reaction L-pipecolate + NAD(+) = Delta(1)-piperideine-2-carboxylate + NADH + H(+). It carries out the reaction L-pipecolate + NADP(+) = Delta(1)-piperideine-2-carboxylate + NADPH + H(+). The catalysed reaction is L-proline + NAD(+) = 1-pyrroline-2-carboxylate + NADH + H(+). The enzyme catalyses L-proline + NADP(+) = 1-pyrroline-2-carboxylate + NADPH + H(+). The protein operates within amino-acid degradation. Catalyzes the reduction of both Delta(1)-pyrroline-2-carboxylate (Pyr2C) and Delta(1)-piperideine-2-carboxylate (Pip2C) to L-proline and L-pipecolate, respectively, using NADPH or NADH as the electron donor. Can also catalyze the reverse oxidation reactions, albeit at a much lower rate. Together with LhpH, is involved in a trans-3-hydroxy-L-proline (t3LHyp) degradation pathway to L-proline, which allows A.brasilense to grow on t3LHyp as a sole carbon source. Also appears to be involved in D-proline and D-lysine metabolism. Does not show ornithine cyclodeaminase (OCD) activity. The polypeptide is Delta(1)-pyrroline-2-carboxylate/Delta(1)-piperideine-2-carboxylate reductase (Azospirillum brasilense).